Here is a 475-residue protein sequence, read N- to C-terminus: Bifunctional protein HldE (475 aa).

Residues 1–318 (MMQYSPKFNN…ENAIHHREET (318 aa)) are ribokinase. 195–198 (NMSE) contributes to the ATP binding site. Asp-264 is an active-site residue. The cytidylyltransferase stretch occupies residues 344 to 475 (MTNGCFDILH…NVIKKIQASK (132 aa)).

It in the N-terminal section; belongs to the carbohydrate kinase PfkB family. The protein in the C-terminal section; belongs to the cytidylyltransferase family. As to quaternary structure, homodimer.

The enzyme catalyses D-glycero-beta-D-manno-heptose 7-phosphate + ATP = D-glycero-beta-D-manno-heptose 1,7-bisphosphate + ADP + H(+). The catalysed reaction is D-glycero-beta-D-manno-heptose 1-phosphate + ATP + H(+) = ADP-D-glycero-beta-D-manno-heptose + diphosphate. It functions in the pathway nucleotide-sugar biosynthesis; ADP-L-glycero-beta-D-manno-heptose biosynthesis; ADP-L-glycero-beta-D-manno-heptose from D-glycero-beta-D-manno-heptose 7-phosphate: step 1/4. It participates in nucleotide-sugar biosynthesis; ADP-L-glycero-beta-D-manno-heptose biosynthesis; ADP-L-glycero-beta-D-manno-heptose from D-glycero-beta-D-manno-heptose 7-phosphate: step 3/4. Functionally, catalyzes the phosphorylation of D-glycero-D-manno-heptose 7-phosphate at the C-1 position to selectively form D-glycero-beta-D-manno-heptose-1,7-bisphosphate. Its function is as follows. Catalyzes the ADP transfer from ATP to D-glycero-beta-D-manno-heptose 1-phosphate, yielding ADP-D-glycero-beta-D-manno-heptose. This is Bifunctional protein HldE from Actinobacillus pleuropneumoniae serotype 5b (strain L20).